The chain runs to 464 residues: 3-isopropylmalate dehydratase large subunit (464 aa).

Cys-337, Cys-397, and Cys-400 together coordinate [4Fe-4S] cluster.

Belongs to the aconitase/IPM isomerase family. LeuC type 1 subfamily. As to quaternary structure, heterodimer of LeuC and LeuD. [4Fe-4S] cluster serves as cofactor.

It carries out the reaction (2R,3S)-3-isopropylmalate = (2S)-2-isopropylmalate. It participates in amino-acid biosynthesis; L-leucine biosynthesis; L-leucine from 3-methyl-2-oxobutanoate: step 2/4. Its function is as follows. Catalyzes the isomerization between 2-isopropylmalate and 3-isopropylmalate, via the formation of 2-isopropylmaleate. The protein is 3-isopropylmalate dehydratase large subunit of Bacillus thuringiensis subsp. konkukian (strain 97-27).